Reading from the N-terminus, the 390-residue chain is Zinc finger CCCH domain-containing protein 46 (390 aa).

A C3H1-type zinc finger spans residues 2-29; sequence SRRQEICRNFQRGSCKYGAQCRYLHASP. The segment at 27 to 129 is disordered; the sequence is ASPHQQQQQQ…AAHTSCEDPQ (103 aa). A compositionally biased stretch (low complexity) spans 48 to 76; that stretch reads GSRQQQQPSFGSQFQQQQQQQQKPNPFGF. Residues 106–129 are compositionally biased toward polar residues; that stretch reads PTKQTEAVQPPQAQAAHTSCEDPQ. The interval 146–211 is required for transcriptional activation activity; it reads WKLTCYAHLR…FTNLLNSARP (66 aa). Residues 230-248 show a composition bias toward polar residues; that stretch reads SSFGASQTNGPPVFSSFSQ. The interval 230–284 is disordered; it reads SSFGASQTNGPPVFSSFSQIGAATNIGPGPGTTAPGMPASSPFGHPSSAPLAAPT. The segment covering 250–268 has biased composition (low complexity); sequence GAATNIGPGPGTTAPGMPA.

Interacts with GSK1 and GSK4. In terms of processing, phosphorylated on serine and threonine residues by GSK1. Phosphorylation represses nuclear localization. As to expression, expressed in the adaxial face of the collar, nodes and the basal region of elongating internodes.

It localises to the nucleus. Its subcellular location is the cytoplasm. In terms of biological role, transcriptional activator that binds double-stranded DNA and the single-stranded RNA polymers poly(rA), poly(rU) and poly(rG), but not poly(rC). Mediates optimal plant architecture through brassinosteroid (BR) signaling. May act as a negative regulator in sterol homeostasis. Acts as a negative regulator of BR signaling. Binds to the specific DNA sequence 5'-CTCGC-3' of BZR1 promoter and negatively regulates BZR1. Acts as an antagonistic transcription factor of BZR1 to attenuate the BR signaling pathway and regulate leaf bending. Represses the expression of ILI1, and activates that of IBH1 to balance the regulation activity of BZR1. The chain is Zinc finger CCCH domain-containing protein 46 from Oryza sativa subsp. japonica (Rice).